The sequence spans 78 residues: Mitochondrial import inner membrane translocase subunit Tim9 (78 aa).

The Twin CX3C motif signature appears at 24–48 (CFTSCVNEFGSRTVNAKEESCANNC). 2 cysteine pairs are disulfide-bonded: Cys-24–Cys-48 and Cys-28–Cys-44.

It belongs to the small Tim family. As to quaternary structure, heterohexamer; composed of 3 copies of tim-9/tin-9.1 and 3 copies of tim-10/tin-10, named soluble 70 kDa complex. The complex associates with the tim-22 component of the TIM22 complex. Interacts with multi-pass transmembrane proteins in transit.

The protein localises to the mitochondrion inner membrane. In terms of biological role, mitochondrial intermembrane chaperone that participates in the import and insertion of multi-pass transmembrane proteins into the mitochondrial inner membrane. May also be required for the transfer of beta-barrel precursors from the TOM complex to the sorting and assembly machinery (SAM complex) of the outer membrane. Acts as a chaperone-like protein that protects the hydrophobic precursors from aggregation and guide them through the mitochondrial intermembrane space. The protein is Mitochondrial import inner membrane translocase subunit Tim9 (tin-9.1) of Caenorhabditis briggsae.